We begin with the raw amino-acid sequence, 118 residues long: Large ribosomal subunit protein bL20 (118 aa).

The protein belongs to the bacterial ribosomal protein bL20 family.

Binds directly to 23S ribosomal RNA and is necessary for the in vitro assembly process of the 50S ribosomal subunit. It is not involved in the protein synthesizing functions of that subunit. This Sodalis glossinidius (strain morsitans) protein is Large ribosomal subunit protein bL20.